A 321-amino-acid chain; its full sequence is Glucokinase (321 aa).

Position 8–13 (8–13 (GDVGGT)) interacts with ATP.

This sequence belongs to the bacterial glucokinase family.

The protein localises to the cytoplasm. The catalysed reaction is D-glucose + ATP = D-glucose 6-phosphate + ADP + H(+). The polypeptide is Glucokinase (Psychromonas ingrahamii (strain DSM 17664 / CCUG 51855 / 37)).